Reading from the N-terminus, the 459-residue chain is Aluminum-activated malate transporter 1 (459 aa).

Topologically, residues 1–52 (MDIDHGRESDGEMVGTIASCGLLLHSLLAGLGRRAAGFARKVGGAAREDPRR) are extracellular. 2 consecutive transmembrane segments (helical) span residues 53–73 (VAHS…YFVT) and 74–94 (PLFN…VVVM). Over 95-108 (EYTVGATLSKGLNR) the chain is Extracellular. A helical transmembrane segment spans residues 109 to 129 (ALATLVAGCIAVGAHQLAELA). Over 130-137 (ERCGDQGE) the chain is Cytoplasmic. A helical transmembrane segment spans residues 138–158 (PIVLTVLVFFVASAATFLRFI). Topologically, residues 159 to 160 (PE) are extracellular. A helical membrane pass occupies residues 161–181 (IKAKYDYGVTIFILTFGLVAV). Topologically, residues 182–199 (SSYRVEELIQLAHQRFYT) are cytoplasmic. Residues 200–220 (IAVGVFICLCTTVFLFPVWAG) traverse the membrane as a helical segment. Topologically, residues 221 to 459 (EDVHKLASGN…DEPLPDVVIL (239 aa)) are extracellular.

It belongs to the aromatic acid exporter (TC 2.A.85) family. Detected in root tips.

The protein localises to the cell membrane. Activated by external aluminum. The enhancement of malate transport is not due to alteration in the selectivity properties but is due to an increased anion permeability. Functionally, malate transporter critical for aluminum tolerance. Permeable to chloride, nitrate, sulfate and malate. The polypeptide is Aluminum-activated malate transporter 1 (ALMT1) (Triticum aestivum (Wheat)).